A 328-amino-acid chain; its full sequence is AA9 family lytic polysaccharide monooxygenase A (328 aa).

The N-terminal stretch at 1 to 21 (MPSTKVAALSAVLALASTVAG) is a signal peptide. His-22 contributes to the Cu(2+) binding site. His-22 bears the Methylhistidine mark. 2 disulfides stabilise this stretch: Cys-77-Cys-199 and Cys-118-Cys-122. N-linked (GlcNAc...) asparagine glycosylation is present at Asn-80. Position 107 (His-107) interacts with Cu(2+). N-linked (GlcNAc...) asparagine glycans are attached at residues Asn-121 and Asn-159. O2 is bound by residues His-185 and Gln-194. Tyr-196 contacts Cu(2+). Ser-235 and Ser-237 each carry an O-linked (Man...) serine glycan. Residues Thr-238 and Thr-245 are each glycosylated (O-linked (Man...) threonine).

The protein belongs to the polysaccharide monooxygenase AA9 family. Requires Cu(2+) as cofactor. In terms of processing, the catalytically essential N-terminal histidine His-22 is post-translationally modified by methylation to prevent protonation of the histidine side chain, and protect the critical active site of the enzyme from oxidative damage.

The protein resides in the secreted. The enzyme catalyses [(1-&gt;4)-beta-D-glucosyl]n+m + reduced acceptor + O2 = 4-dehydro-beta-D-glucosyl-[(1-&gt;4)-beta-D-glucosyl]n-1 + [(1-&gt;4)-beta-D-glucosyl]m + acceptor + H2O.. In terms of biological role, lytic polysaccharide monooxygenase (LPMO) that depolymerizes crystalline and amorphous polysaccharides via the oxidation of scissile alpha- or beta-(1-4)-glycosidic bonds, yielding C1 and C4 oxidation products. Catalysis by LPMOs requires the reduction of the active-site copper from Cu(II) to Cu(I) by a reducing agent and H(2)O(2) or O(2) as a cosubstrate. Shows activity on cellulosic substrates (Avicel, carboxymethylcellulose) and xylan. The chain is AA9 family lytic polysaccharide monooxygenase A from Talaromyces verruculosus (Penicillium verruculosum).